The chain runs to 119 residues: Holo-[acyl-carrier-protein] synthase (119 aa).

Mg(2+)-binding residues include Asp-8 and Glu-58.

This sequence belongs to the P-Pant transferase superfamily. AcpS family. It depends on Mg(2+) as a cofactor.

Its subcellular location is the cytoplasm. The enzyme catalyses apo-[ACP] + CoA = holo-[ACP] + adenosine 3',5'-bisphosphate + H(+). Its function is as follows. Transfers the 4'-phosphopantetheine moiety from coenzyme A to a Ser of acyl-carrier-protein. In Bacillus cytotoxicus (strain DSM 22905 / CIP 110041 / 391-98 / NVH 391-98), this protein is Holo-[acyl-carrier-protein] synthase.